Reading from the N-terminus, the 198-residue chain is Small ribosomal subunit protein uS4c (198 aa).

An S4 RNA-binding domain is found at 85-145; the sequence is LRLDATIFRL…PKKFTIILIC (61 aa).

This sequence belongs to the universal ribosomal protein uS4 family. As to quaternary structure, part of the 30S ribosomal subunit.

It is found in the plastid. Its subcellular location is the apicoplast. One of the primary rRNA binding proteins, it binds directly to 16S rRNA where it nucleates assembly of the body of the 30S subunit. This chain is Small ribosomal subunit protein uS4c (rps4), found in Toxoplasma gondii.